The primary structure comprises 214 residues: Thymidylate kinase (214 aa).

Residue 9-16 (GVDGSGKS) coordinates ATP.

This sequence belongs to the thymidylate kinase family.

The enzyme catalyses dTMP + ATP = dTDP + ADP. Phosphorylation of dTMP to form dTDP in both de novo and salvage pathways of dTTP synthesis. The chain is Thymidylate kinase from Symbiobacterium thermophilum (strain DSM 24528 / JCM 14929 / IAM 14863 / T).